Here is a 165-residue protein sequence, read N- to C-terminus: Transcription elongation factor GreA (165 aa).

Residues 55–78 (AAKEEQGKQELRVRQLTQLLENAK) adopt a coiled-coil conformation.

This sequence belongs to the GreA/GreB family.

Functionally, necessary for efficient RNA polymerase transcription elongation past template-encoded arresting sites. The arresting sites in DNA have the property of trapping a certain fraction of elongating RNA polymerases that pass through, resulting in locked ternary complexes. Cleavage of the nascent transcript by cleavage factors such as GreA or GreB allows the resumption of elongation from the new 3'terminus. GreA releases sequences of 2 to 3 nucleotides. The sequence is that of Transcription elongation factor GreA from Streptomyces avermitilis (strain ATCC 31267 / DSM 46492 / JCM 5070 / NBRC 14893 / NCIMB 12804 / NRRL 8165 / MA-4680).